The following is a 252-amino-acid chain: Imidazole glycerol phosphate synthase subunit HisF (252 aa).

Catalysis depends on residues Asp-11 and Asp-130.

The protein belongs to the HisA/HisF family. In terms of assembly, heterodimer of HisH and HisF.

Its subcellular location is the cytoplasm. It carries out the reaction 5-[(5-phospho-1-deoxy-D-ribulos-1-ylimino)methylamino]-1-(5-phospho-beta-D-ribosyl)imidazole-4-carboxamide + L-glutamine = D-erythro-1-(imidazol-4-yl)glycerol 3-phosphate + 5-amino-1-(5-phospho-beta-D-ribosyl)imidazole-4-carboxamide + L-glutamate + H(+). Its pathway is amino-acid biosynthesis; L-histidine biosynthesis; L-histidine from 5-phospho-alpha-D-ribose 1-diphosphate: step 5/9. IGPS catalyzes the conversion of PRFAR and glutamine to IGP, AICAR and glutamate. The HisF subunit catalyzes the cyclization activity that produces IGP and AICAR from PRFAR using the ammonia provided by the HisH subunit. The protein is Imidazole glycerol phosphate synthase subunit HisF of Bacillus mycoides (strain KBAB4) (Bacillus weihenstephanensis).